A 132-amino-acid polypeptide reads, in one-letter code: S-protein homolog 19 (132 aa).

A signal peptide spans 1 to 26; that stretch reads MSGSLAFHIIMSVTFMVFFFGGLCEA. Asn87 carries N-linked (GlcNAc...) asparagine glycosylation.

Belongs to the plant self-incompatibility (S1) protein family.

The protein localises to the secreted. This is S-protein homolog 19 from Arabidopsis thaliana (Mouse-ear cress).